Consider the following 930-residue polypeptide: GPI ethanolamine phosphate transferase 1 (930 aa).

Residues 1–8 (MARLGRTG) lie on the Cytoplasmic side of the membrane. The helical transmembrane segment at 9-29 (FLTLAVVFHLIYAYSIFDIYF) threads the bilayer. Residues 30–466 (VSPIVSGMRP…LQTYDWLFLR (437 aa)) are Lumenal-facing. The N-linked (GlcNAc...) asparagine glycan is linked to Asn-148. The helical transmembrane segment at 467 to 487 (TIVTFGYVGWIAYALTTVIHL) threads the bilayer. At 488-498 (HVLHGASESDR) the chain is on the cytoplasmic side. A helical membrane pass occupies residues 499–519 (TTASISFFSSVLVALFSVFLY). The Lumenal portion of the chain corresponds to 520–521 (QG). Residues 522–542 (SPWRYYLYGFFPIFFWEEVFA) form a helical membrane-spanning segment. The Cytoplasmic portion of the chain corresponds to 543 to 569 (RRKAFHAGRAGALLLPKRDLHSNKVED). A helical membrane pass occupies residues 570 to 590 (IDTITYGGAFMLLTGLLYLLF). The Lumenal segment spans residues 591 to 611 (EDEILGTSHQPAAVSRKGSRN). Residues 612–632 (IMGLQLGMVLLALIVTRSSAA) form a helical membrane-spanning segment. At 633–639 (SLQAKQG) the chain is on the cytoplasmic side. The chain crosses the membrane as a helical span at residues 640–660 (LPFGNQVVGWGVLIASLLLPF). The Lumenal portion of the chain corresponds to 661–684 (AHRLYPNSHYLHRLMIIFLTFSPT). Residues 685-705 (FIILTISYEGLFYFAFCMTLV) form a helical membrane-spanning segment. The Cytoplasmic portion of the chain corresponds to 706 to 761 (TWVRLEHATYVYTAKPVAKQAQETIEPPKKANPGATTVVDGETYRFRTLTVSDARV). Residues 762–782 (ALFFFFLLQSAFFSTGNIASI) traverse the membrane as a helical segment. Residues 783–803 (SSFSLDSVYRLIPVFNPFSQG) lie on the Lumenal side of the membrane. A helical transmembrane segment spans residues 804-824 (ALLILKLLIPFAIISANLGIL). The Cytoplasmic segment spans residues 825–833 (NRRLEVAPS). A helical transmembrane segment spans residues 834–854 (ALFMVVMAISDVMTLNFFYMV). The Lumenal segment spans residues 855 to 870 (RDEGSWLDIGTTISHF). Residues 871–891 (CIASFLCTFVAGLEFLSEVFI) traverse the membrane as a helical segment. The Cytoplasmic segment spans residues 892 to 930 (SGVDFGLRTDAITASVPDIVNGITSKGQKDVPNGVEDKE).

It belongs to the PIGG/PIGN/PIGO family. PIGN subfamily.

Its subcellular location is the endoplasmic reticulum membrane. Its pathway is glycolipid biosynthesis; glycosylphosphatidylinositol-anchor biosynthesis. Functionally, ethanolamine phosphate transferase involved in glycosylphosphatidylinositol-anchor biosynthesis. Transfers ethanolamine phosphate to the first alpha-1,4-linked mannose of the glycosylphosphatidylinositol precursor of GPI-anchor. The polypeptide is GPI ethanolamine phosphate transferase 1 (mcd4) (Emericella nidulans (strain FGSC A4 / ATCC 38163 / CBS 112.46 / NRRL 194 / M139) (Aspergillus nidulans)).